Here is a 930-residue protein sequence, read N- to C-terminus: F-box only protein 11 (930 aa).

Residues 1–150 (MNSVRAANRR…RVSGKSQDLS (150 aa)) are disordered. A compositionally biased stretch (basic residues) spans 7 to 16 (ANRRPRRVSR). The span at 17-27 (PRPVQQQQQQP) shows a compositional bias: low complexity. Positions 28–73 (PQQPPPQPPQQQPPPQPPQQPPQQQPPPPPQQQPPPPPPPPPPPPQ) are enriched in pro residues. The span at 117–132 (PTKSSMEGASTSTTEN) shows a compositional bias: polar residues. Positions 156–202 (QYLQEKLPDEVVLKIFSYLLEQDLCRAACVCKRFSELANDPILWKRL) constitute an F-box domain. PbH1 repeat units follow at residues 398-420 (GACP…YITD), 421-443 (HAQG…WVKN), 444-466 (HGNP…FTFD), 467-489 (HGMG…EVKA), 490-512 (YANP…YVHE), 513-535 (KGRG…WITS), 536-558 (NSDP…YIFG), 559-581 (DGRG…QIRT), 582-604 (NSCP…YVHE), 605-627 (KGQG…WVTT), 628-650 (GSTP…YFYD), 651-673 (NGHG…QIRT), 674-696 (GSNP…LVYN), 697-719 (SGLG…WIKT), 720-742 (DSNP…CIFN), 743-765 (GGRG…LIST), 766-788 (NSHP…EITN), 789-811 (HATA…FLAS), and 812-833 (GVNV…EKAV). The segment at 836–907 (GQCLYKISSY…LSNPCTLAGE (72 aa)) adopts a UBR-type zinc-finger fold.

Component of the SCF(FBXO11) complex consisting of CUL1, RBX1, SKP1 and FBXO11. Interacts with CIITA. In terms of tissue distribution, at 9.5 dpc and 10.5 dpc, expression is restricted to developing heart tissue. By 11.5 dpc and 12.5 dpc, detected in liver and subsequently in muscle by 13.5 dpc. At 14.5 dpc, still detected in heart, liver and muscle and also in the developing secondary palate including the nasal, medial and oral epithelia of the palatal shelves. At 15.5 dpc and 16.5 dpc, expressed in lung, kidney, heart, liver, muscle and adrenal gland. At this time, fusion of the palate shelves has occurred, with expression confined to the nasal and oral epithelia. At 17.5 dpc, expression in the lung is confined to bronchial epithelial cells and is evident in bone marrow, skin, tissue macrophages, osteoblasts, kidney, liver and spleen. At 18.5 dpc, expressed in bone marrow, liver, kidney and muscle but decreases in heart and lung. At this time, first detected in the middle ear epithelium. At the newborn stage, expression is strong in the middle ear where it is confined to mucin-secreting cells, as well as persisting in bone marrow, kidney and liver. Middle ear expression persists in postnatal head tissue at 4 and 13 days after birth and has declined by 21 days after birth. In the adult, expression is seen in alveolar macrophages of the lung, glomeruli and collecting tubules of the kidney, midbrain, heart and muscle.

It is found in the nucleus. Its subcellular location is the chromosome. The protein operates within protein modification; protein ubiquitination. In terms of biological role, substrate recognition component of a SCF (SKP1-CUL1-F-box protein) E3 ubiquitin-protein ligase complex which mediates the ubiquitination and subsequent proteasomal degradation of target proteins, such as DTL/CDT2, BCL6, SNAI1 and PRDM1/BLIMP1. The SCF(FBXO11) complex mediates ubiquitination and degradation of BCL6, thereby playing a role in the germinal center B-cells terminal differentiation toward memory B-cells and plasma cells. The SCF(FBXO11) complex also mediates ubiquitination and degradation of DTL, an important step for the regulation of TGF-beta signaling, cell migration and the timing of the cell-cycle progression and exit. The SCF(FBXO11) complex also catalyzes ubiquitination and degradation of GSK3B-phosphorylated SNAI1. Binds to and neddylates phosphorylated p53/TP53, inhibiting its transcriptional activity. Plays a role in the regulatiom of erythropoiesis but not myelopoiesis or megakaryopoiesis. Mechanistically, activates erythroid genes by mediating the degradation of BAHD1, a heterochromatin-associated protein that recruits corepressors to H3K27me3 marks. Participates in macrophage cell death and inflammation in response to bacterial toxins by regulating the expression of complement 5a receptor 1/C5AR1 and IL-1beta. Acts as a critical regulator to determine the level of MHC-II by mediating the recognition of degron at the P/S/T domain of CIITA leading to its ubiquitination and subsequent degradation via the proteasome. Participates in the antiviral repsonse by initiating the activation of TBK1-IRF3-IFN-I axis. Mediates the 'Lys-63'-linked ubiquitination of TRAF3 to strengthen the interaction between TRAF3 and TBK1. In Mus musculus (Mouse), this protein is F-box only protein 11.